The sequence spans 183 residues: Pyruvoyl-dependent arginine decarboxylase 2 (183 aa).

Pyruvic acid (Ser) is present on Ser41.

This sequence belongs to the PdaD family. It depends on pyruvate as a cofactor.

The catalysed reaction is L-arginine + H(+) = agmatine + CO2. This Methanosarcina acetivorans (strain ATCC 35395 / DSM 2834 / JCM 12185 / C2A) protein is Pyruvoyl-dependent arginine decarboxylase 2 (pdaD2).